A 618-amino-acid polypeptide reads, in one-letter code: Glycine--tRNA ligase 2 (618 aa).

Glu-187 contributes to the glycine binding site. Residues 219-221 (RNE) and 230-231 (RV) each bind ATP. Glycine is bound at residue Glu-238. Position 347-348 (347-348 (EC)) interacts with ATP. 466-468 (EPS) contributes to the glycine binding site. Arg-473 lines the ATP pocket.

The protein belongs to the class-II aminoacyl-tRNA synthetase family. In terms of assembly, homodimer.

It localises to the cytoplasm. The enzyme catalyses tRNA(Gly) + glycine + ATP = glycyl-tRNA(Gly) + AMP + diphosphate. It catalyses the reaction 2 ATP + H(+) = P(1),P(4)-bis(5'-adenosyl) tetraphosphate + diphosphate. In terms of biological role, catalyzes the ATP-dependent ligation of glycine to the 3'-end of its cognate tRNA, via the formation of an aminoacyl-adenylate intermediate (Gly-AMP). Also produces diadenosine tetraphosphate (Ap4A), a universal pleiotropic signaling molecule needed for cell regulation pathways, by direct condensation of 2 ATPs. Thereby, may play a special role in Ap4A homeostasis. The sequence is that of Glycine--tRNA ligase 2 (GRS2) from Saccharomyces cerevisiae (strain ATCC 204508 / S288c) (Baker's yeast).